We begin with the raw amino-acid sequence, 308 residues long: SAP30-binding protein (308 aa).

The disordered stretch occupies residues 15–101 (AEYSDPESDG…EAEKRDPQEL (87 aa)). Phosphoserine is present on residues S18, S22, S43, and S52. Residues 57-78 (DEDGYEEEEDENSKQSEDDDSE) show a composition bias toward acidic residues. A compositionally biased stretch (basic and acidic residues) spans 79 to 99 (TEKPEADDPKDNTEAEKRDPQ). Residue K95 forms a Glycyl lysine isopeptide (Lys-Gly) (interchain with G-Cter in SUMO2) linkage. Residue S113 is modified to Phosphoserine. Residues K220, K304, and K305 each participate in a glycyl lysine isopeptide (Lys-Gly) (interchain with G-Cter in SUMO2) cross-link.

This sequence belongs to the HCNGP family. In terms of assembly, interacts with histone deacetylase complex subunit SAP30.

The protein localises to the nucleus. Functionally, plays a role in transcriptional repression by promoting histone deacetylase activity, leading to deacetylation of histone H3. May be involved in the regulation of beta-2-microglobulin genes. This is SAP30-binding protein (Sap30bp) from Mus musculus (Mouse).